The following is a 492-amino-acid chain: Glutamyl-tRNA(Gln) amidotransferase subunit A (492 aa).

Active-site charge relay system residues include lysine 79 and serine 154. Serine 178 acts as the Acyl-ester intermediate in catalysis.

It belongs to the amidase family. GatA subfamily. Heterotrimer of A, B and C subunits.

The catalysed reaction is L-glutamyl-tRNA(Gln) + L-glutamine + ATP + H2O = L-glutaminyl-tRNA(Gln) + L-glutamate + ADP + phosphate + H(+). Its function is as follows. Allows the formation of correctly charged Gln-tRNA(Gln) through the transamidation of misacylated Glu-tRNA(Gln) in organisms which lack glutaminyl-tRNA synthetase. The reaction takes place in the presence of glutamine and ATP through an activated gamma-phospho-Glu-tRNA(Gln). The chain is Glutamyl-tRNA(Gln) amidotransferase subunit A from Acinetobacter baylyi (strain ATCC 33305 / BD413 / ADP1).